The following is a 656-amino-acid chain: FAST kinase domain-containing protein 3, mitochondrial (656 aa).

In terms of domain architecture, RAP spans 587 to 645 (VALCIDGPQRFCLGSKHLLGKEAIKQRHLRLLGYQVVQVPYHELELLTSRLELVDYLQR).

The protein belongs to the FAST kinase family.

It is found in the mitochondrion. Required for normal mitochondrial respiration. Increases steady-state levels and half-lives of a subset of mature mitochondrial mRNAs MT-ND2, MT-ND3, MT-CYTB, MT-CO2, and MT-ATP8/6. Promotes MT-CO1 mRNA translation and increases mitochondrial complex IV assembly and activity. The sequence is that of FAST kinase domain-containing protein 3, mitochondrial (Fastkd3) from Rattus norvegicus (Rat).